We begin with the raw amino-acid sequence, 518 residues long: Stage V sporulation protein B (518 aa).

14 consecutive transmembrane segments (helical) span residues 6–26 (FLKG…LGFV), 45–65 (MAAP…PVAI), 91–111 (ITGV…PVMA), 120–140 (TLYP…SSVL), 165–185 (ISLV…YAAA), 186–206 (GAML…FVCF), 250–270 (WFFE…ATVA), 281–301 (FAMT…TALV), 326–346 (LCLL…DELM), 348–368 (VMYG…FFLL), 387–407 (AAMM…FVLA), 411–431 (SLGI…VTLL), 446–466 (IKEY…SSAI), and 478–498 (VNLA…LLVF).

Belongs to the polysaccharide synthase family.

The protein localises to the cell membrane. Involved, directly or indirectly, in spore cortex biosynthesis. Affects only indirectly the expression of late sporulation genes. This chain is Stage V sporulation protein B (spoVB), found in Bacillus subtilis (strain 168).